The chain runs to 149 residues: Transcriptional repressor NrdR (149 aa).

A zinc finger spans residues 3–34 (CPFCSATDTKVIDSRLVADGHQVRRRRECVQC). Positions 49–139 (PRVVKQDGSR…VYRAFEDVSE (91 aa)) constitute an ATP-cone domain.

Belongs to the NrdR family. Zn(2+) is required as a cofactor.

Its function is as follows. Negatively regulates transcription of bacterial ribonucleotide reductase nrd genes and operons by binding to NrdR-boxes. In Shewanella piezotolerans (strain WP3 / JCM 13877), this protein is Transcriptional repressor NrdR.